A 231-amino-acid chain; its full sequence is Elongation factor 1-delta (231 aa).

Residues 75–136 form a disordered region; sequence SGVTVEGNAP…AAAAAAKPAK (62 aa). A compositionally biased stretch (acidic residues) spans 101 to 117; that stretch reads ADDDDDDDVDLFGEETE. The span at 118–127 shows a compositional bias: basic and acidic residues; sequence EEKKAAEERA.

This sequence belongs to the EF-1-beta/EF-1-delta family. EF-1 is composed of 4 subunits: alpha, beta (1B-alpha=beta'), delta (1B-beta), and gamma (1B-gamma).

Its function is as follows. EF-1-beta and EF-1-beta' stimulate the exchange of GDP bound to EF-1-alpha to GTP. The polypeptide is Elongation factor 1-delta (Beta vulgaris (Sugar beet)).